Reading from the N-terminus, the 636-residue chain is Tumor protein p73 (636 aa).

The tract at residues 1-46 (MAQSTATSPDGGTTFEHLWSSLEPDSTYFDLPQSSRGNNEVVGGTD) is transactivation. Residue Thr-27 is modified to Phosphothreonine; by PLK1. Position 28 is a phosphotyrosine; by SRC and HCK (Tyr-28). A disordered region spans residues 78-104 (RAASASPYTPEHAASVPTHSPYAQPSS). The segment covering 94–104 (PTHSPYAQPSS) has biased composition (polar residues). Phosphotyrosine; by ABL1 is present on Tyr-99. Residues 131–310 (FQQSSTAKSA…DRKADEDHYR (180 aa)) are DNA-binding. Zn(2+) is bound by residues Cys-194, His-197, Cys-258, and Cys-262. Residues 314 to 345 (ALNESSAKNGAASKRAFKQSPPAVPALGAGVK) form a disordered region. Positions 345 to 380 (KKRRHGDEDTYYLQVRGRENFEILMKLKESLELMEL) are interaction with HIPK2. The segment at 345–386 (KKRRHGDEDTYYLQVRGRENFEILMKLKESLELMELVPQPLV) is oligomerization. The short motif at 483 to 487 (PPPPY) is the PPxY motif element. Residues 485–551 (PPYHADPSLV…WRGLQDLKQG (67 aa)) enclose the SAM domain. A Glycyl lysine isopeptide (Lys-Gly) (interchain with G-Cter in SUMO); in isoform Alpha cross-link involves residue Lys-627. Lys-627 is covalently cross-linked (Glycyl lysine isopeptide (Lys-Gly) (interchain with G-Cter in SUMO2)).

Belongs to the p53 family. Found in a complex with p53/TP53 and CABLES1. The C-terminal oligomerization domain binds to the ABL1 tyrosine kinase SH3 domain. Interacts with HECW2. Isoform Beta interacts homotypically and with p53/TP53, whereas isoform Alpha does not. Isoform Gamma interacts homotypically and with all p73 isoforms. Isoform Delta interacts with isoform Gamma, isoform Alpha, and homotypically. Isoforms Alpha and Beta interact with HIPK2. Isoform Alpha interacts with RANBP9. Isoform Beta interacts with WWOX. Interacts (via SAM domain) with FBXO45 (via B30.2/SPRY domain). Interacts with YAP1 (phosphorylated form). Interacts with HCK (via SH3 domain); this inhibits TP73 activity and degradation. Interacts (via SAM domain) with NQO1; this interaction is NADH-dependent, stabilizes TP73 in response to oxidative stress and protects it from ubiquitin-independent degradation by the 20S proteasome. In terms of assembly, (Microbial infection) Interacts with Epstein-Barr virus protein EBNA6; this interaction inhibits TP73-mediated apoptotic pathway. Requires Zn(2+) as cofactor. In terms of processing, isoform alpha (but not isoform beta) is sumoylated on Lys-627, which potentiates proteasomal degradation but does not affect transcriptional activity. Phosphorylation by PLK1 and PLK3 inhibits the transcription regulator activity and pro-apoptotic function. Higher levels of phosphorylation seen in the brain from patients with Huntington disease. Post-translationally, polyubiquitinated by RCHY1/PIRH2; leading to its degradation by the proteasome. As to expression, expressed in striatal neurons of patients with Huntington disease (at protein level). Brain, kidney, placenta, colon, heart, liver, spleen, skeletal muscle, prostate, thymus and pancreas. Highly expressed in fetal tissue. Expressed in the respiratory epithelium.

Its subcellular location is the nucleus. The protein localises to the cytoplasm. Functionally, participates in the apoptotic response to DNA damage. Isoforms containing the transactivation domain are pro-apoptotic, isoforms lacking the domain are anti-apoptotic and block the function of p53 and transactivating p73 isoforms. May be a tumor suppressor protein. Is an activator of FOXJ1 expression. It is an essential factor for the positive regulation of lung ciliated cell differentiation. The chain is Tumor protein p73 (TP73) from Homo sapiens (Human).